The following is a 677-amino-acid chain: Methionine--tRNA ligase (677 aa).

A 'HIGH' region motif is present at residues 15 to 25 (PYANGSIHLGH). Residues cysteine 146, cysteine 149, cysteine 159, and cysteine 162 each coordinate Zn(2+). The 'KMSKS' region motif lies at 333–337 (KMSKS). Residue lysine 336 participates in ATP binding. A tRNA-binding domain is found at 575 to 677 (DFAKVDLRVA…AGAKPGHQVK (103 aa)).

This sequence belongs to the class-I aminoacyl-tRNA synthetase family. MetG type 1 subfamily. As to quaternary structure, homodimer. Zn(2+) is required as a cofactor.

The protein resides in the cytoplasm. The catalysed reaction is tRNA(Met) + L-methionine + ATP = L-methionyl-tRNA(Met) + AMP + diphosphate. Is required not only for elongation of protein synthesis but also for the initiation of all mRNA translation through initiator tRNA(fMet) aminoacylation. The chain is Methionine--tRNA ligase from Escherichia coli O81 (strain ED1a).